Consider the following 394-residue polypeptide: Elongation factor Tu (394 aa).

One can recognise a tr-type G domain in the interval 10–204 (KPHVNIGTIG…AVDSYIPQPV (195 aa)). Residues 19 to 26 (GHVDHGKT) are G1. 19–26 (GHVDHGKT) lines the GTP pocket. T26 provides a ligand contact to Mg(2+). The interval 60–64 (GITIS) is G2. The tract at residues 81-84 (DCPG) is G3. GTP contacts are provided by residues 81–85 (DCPGH) and 136–139 (NKVD). Positions 136–139 (NKVD) are G4. The tract at residues 174-176 (SAL) is G5.

Belongs to the TRAFAC class translation factor GTPase superfamily. Classic translation factor GTPase family. EF-Tu/EF-1A subfamily. In terms of assembly, monomer.

It localises to the cytoplasm. It carries out the reaction GTP + H2O = GDP + phosphate + H(+). GTP hydrolase that promotes the GTP-dependent binding of aminoacyl-tRNA to the A-site of ribosomes during protein biosynthesis. This chain is Elongation factor Tu, found in Rickettsia helvetica.